The following is a 198-amino-acid chain: Holliday junction branch migration complex subunit RuvA (198 aa).

A domain I region spans residues 1–63; sequence MYDYIKGQLT…EDAHLLFGFH (63 aa). Residues 64 to 142 form a domain II region; sequence TEDEKDVFLK…EAPQETGHTK (79 aa). Residues 143–147 are flexible linker; sequence ARSNK. Residues 148-198 are domain III; it reads AGNTQLDEAIEALLALGYKAKELKKIRAFFEETSETAEQYIKSALKLLMKG.

It belongs to the RuvA family. In terms of assembly, homotetramer. Forms an RuvA(8)-RuvB(12)-Holliday junction (HJ) complex. HJ DNA is sandwiched between 2 RuvA tetramers; dsDNA enters through RuvA and exits via RuvB. An RuvB hexamer assembles on each DNA strand where it exits the tetramer. Each RuvB hexamer is contacted by two RuvA subunits (via domain III) on 2 adjacent RuvB subunits; this complex drives branch migration. In the full resolvosome a probable DNA-RuvA(4)-RuvB(12)-RuvC(2) complex forms which resolves the HJ.

Its subcellular location is the cytoplasm. Its function is as follows. The RuvA-RuvB-RuvC complex processes Holliday junction (HJ) DNA during genetic recombination and DNA repair, while the RuvA-RuvB complex plays an important role in the rescue of blocked DNA replication forks via replication fork reversal (RFR). RuvA specifically binds to HJ cruciform DNA, conferring on it an open structure. The RuvB hexamer acts as an ATP-dependent pump, pulling dsDNA into and through the RuvAB complex. HJ branch migration allows RuvC to scan DNA until it finds its consensus sequence, where it cleaves and resolves the cruciform DNA. The protein is Holliday junction branch migration complex subunit RuvA of Streptococcus pyogenes serotype M2 (strain MGAS10270).